Reading from the N-terminus, the 152-residue chain is Natriuretic peptides A (152 aa).

Residues 1–24 (MGSSAITTSFLLFVAFQLPGQTGA) form the signal peptide. 2 consecutive propeptides follow at residues 25 to 122 (NPVY…TAPR) and 92 to 102 (EMGAPSDGDPG). Positions 50-108 (MPLEDEAVPSQVLSEQNEEAGAPLSPLSEVPPWDGGRSTQPREMGAPSDGDPGNPPRSV) are disordered. The residue at position 128 (Ser128) is a Phosphoserine. Residues Cys129 and Cys145 are joined by a disulfide bond. Residues 146-150 (NSFRY) form an important for degradation of atrial natriuretic peptide by IDE region.

This sequence belongs to the natriuretic peptide family. Homodimer; disulfide-linked antiparallel dimer. In terms of processing, the precursor molecule is proteolytically cleaved by CORIN at Arg-122 to produce the atrial natriuretic peptide. Undergoes further proteolytic cleavage by unknown proteases to give rise to long-acting natriuretic peptide, vessel dilator and kaliuretic peptide. Additional processing gives rise to the auriculin and atriopeptin peptides. In the kidneys, alternative processing by an unknown protease results in the peptide urodilatin. Cleavage by MME initiates degradation of the factor and thereby regulates its activity. Degradation by IDE results in reduced activation of NPR1 (in vitro). During IDE degradation, the resulting products can temporarily stimulate NPR2 to produce cGMP, before the fragments are completely degraded and inactivated by IDE (in vitro). Post-translationally, degraded by IDE. In terms of processing, phosphorylation on Ser-128 decreases vasorelaxant activity.

It is found in the secreted. Its subcellular location is the perikaryon. The protein resides in the cell projection. In terms of biological role, hormone that plays a key role in mediating cardio-renal homeostasis, and is involved in vascular remodeling and regulating energy metabolism. Acts by specifically binding and stimulating NPR1 to produce cGMP, which in turn activates effector proteins, such as PRKG1, that drive various biological responses. Regulates vasodilation, natriuresis, diuresis and aldosterone synthesis and is therefore essential for regulating blood pressure, controlling the extracellular fluid volume and maintaining the fluid-electrolyte balance. Also involved in inhibiting cardiac remodeling and cardiac hypertrophy by inducing cardiomyocyte apoptosis and attenuating the growth of cardiomyocytes and fibroblasts. Plays a role in female pregnancy by promoting trophoblast invasion and spiral artery remodeling in uterus, and thus prevents pregnancy-induced hypertension. In adipose tissue, acts in various cGMP- and PKG-dependent pathways to regulate lipid metabolism and energy homeostasis. This includes up-regulating lipid metabolism and mitochondrial oxygen utilization by activating the AMP-activated protein kinase (AMPK), and increasing energy expenditure by acting via MAPK11 to promote the UCP1-dependent thermogenesis of brown adipose tissue. Binds the clearance receptor NPR3 which removes the hormone from circulation. Its function is as follows. May have a role in cardio-renal homeostasis through regulation of natriuresis, diuresis, vasodilation, and inhibiting aldosterone synthesis. In vitro, promotes the production of cGMP and induces vasodilation. May promote natriuresis, at least in part, by enhancing prostaglandin E2 synthesis resulting in the inhibition of renal Na+-K+-ATPase. However reports on the involvement of this peptide in mammal blood volume and blood pressure homeostasis are conflicting; according to a report, in vivo it is not sufficient to activate cGMP and does not inhibit collecting duct transport nor effect diuresis and natriuresis. Appears to bind to specific receptors that are distinct from the receptors bound by atrial natriuretic peptide and vessel dilator. Possibly enhances protein excretion in urine by decreasing proximal tubular protein reabsorption. May have a role in cardio-renal homeostasis through regulation of natriuresis, diuresis, and vasodilation. In vitro, promotes the production of cGMP and induces vasodilation. May promote natriuresis, at least in part, by enhancing prostaglandin E2 synthesis resulting in the inhibition of renal Na+-K+-ATPase. However reports on the involvement of this peptide in mammal blood volume and blood pressure homeostasis are conflicting; according to a report it is not sufficient to activate cGMP and does not inhibit collecting duct transport nor effect diuresis and natriuresis. Appears to bind to specific receptors that are distinct from the receptors bound by the atrial natriuretic and long-acting natriuretic peptides. Possibly functions in protein excretion in urine by maintaining the integrity of the proximal tubules and enhancing protein excretion by decreasing proximal tubular protein reabsorption. Functionally, may have a role in cardio-renal homeostasis through regulation of diuresis and inhibiting aldosterone synthesis. In vitro, promotes the production of cGMP and induces vasodilation. May promote natriuresis, at least in part, by enhancing prostaglandin E2 synthesis resulting in the inhibition of renal Na+-K+-ATPase. May have a role in potassium excretion but not sodium excretion (natriuresis). Possibly enhances protein excretion in urine by decreasing proximal tubular protein reabsorption. In terms of biological role, hormone produced in the kidneys that appears to be important for maintaining cardio-renal homeostasis. Mediates vasodilation, natriuresis and diuresis primarily in the renal system, in order to maintain the extracellular fluid volume and control the fluid-electrolyte balance. Specifically binds and stimulates cGMP production by renal transmembrane receptors, likely NPR1. Urodilatin not ANP, may be the natriuretic peptide responsible for the regulation of sodium and water homeostasis in the kidney. Its function is as follows. May have a role in cardio-renal homeostasis through regulation of natriuresis and vasodilation. In vivo promotes natriuresis and in vitro, vasodilates renal artery strips. May have a role in cardio-renal homeostasis through regulation of regulation of natriuresis and vasodilation. In vivo promotes natriuresis. In vitro, vasodilates intestinal smooth muscle but not smooth muscle strips. Functionally, may have a role in cardio-renal homeostasis through regulation of natriuresis and vasodilation. In vivo promotes natriuresis. In vitro, selectively vasodilates intestinal and vascular smooth muscle strips. In terms of biological role, may have a role in cardio-renal homeostasis through regulation of natriuresis and vasodilation. In vivo promotes natriuresis. In vitro, selectively vasodilates intestinal smooth muscle but not vascular smooth muscle strips. This Ovis aries (Sheep) protein is Natriuretic peptides A (NPPA).